Here is a 530-residue protein sequence, read N- to C-terminus: Glutamate--tRNA ligase (530 aa).

A 'HIGH' region motif is present at residues Pro26–Thr36. The 'KMSKS' region motif lies at Lys267–Arg271. Position 270 (Lys270) interacts with ATP.

The protein belongs to the class-I aminoacyl-tRNA synthetase family. Glutamate--tRNA ligase type 1 subfamily. As to quaternary structure, monomer.

Its subcellular location is the cytoplasm. It catalyses the reaction tRNA(Glu) + L-glutamate + ATP = L-glutamyl-tRNA(Glu) + AMP + diphosphate. Functionally, catalyzes the attachment of glutamate to tRNA(Glu) in a two-step reaction: glutamate is first activated by ATP to form Glu-AMP and then transferred to the acceptor end of tRNA(Glu). The polypeptide is Glutamate--tRNA ligase (Gloeobacter violaceus (strain ATCC 29082 / PCC 7421)).